Reading from the N-terminus, the 221-residue chain is Endonuclease V (221 aa).

Residues Asp-43 and Asp-111 each contribute to the Mg(2+) site.

It belongs to the endonuclease V family. Mg(2+) serves as cofactor.

The protein resides in the cytoplasm. The catalysed reaction is Endonucleolytic cleavage at apurinic or apyrimidinic sites to products with a 5'-phosphate.. DNA repair enzyme involved in the repair of deaminated bases. Selectively cleaves double-stranded DNA at the second phosphodiester bond 3' to a deoxyinosine leaving behind the intact lesion on the nicked DNA. The protein is Endonuclease V of Azotobacter vinelandii (strain DJ / ATCC BAA-1303).